Here is a 559-residue protein sequence, read N- to C-terminus: Protochlorophyllide-dependent translocon component 52, chloroplastic (559 aa).

The transit peptide at 1 to 55 directs the protein to the chloroplast; the sequence is MEAALAACALPSLRILNTKPRFRCSFSNPSLPISPNSLITRKSSRFTTAVSSPPS. The interval 44–70 is disordered; it reads SRFTTAVSSPPSSSAATSTNSPPEPEA. Positions 47 to 64 are enriched in low complexity; the sequence is TTAVSSPPSSSAATSTNS. Residues 85-195 enclose the Rieske domain; it reads WYPVMPICDL…STVQHEIIWF (111 aa). Residues Cys127, His129, Cys147, and His150 each contribute to the [2Fe-2S] cluster site. Residues His248 and His253 each contribute to the Fe cation site. The short motif at 483-486 is the Redox-active motif element; sequence CSSC. 2 helical membrane passes run 493 to 513 and 525 to 545; these read LNALEVILQIASVAMIGVMAV and IAVLVAAVLSFAASKWLSHFI.

[2Fe-2S] cluster serves as cofactor.

Its subcellular location is the plastid. It localises to the chloroplast inner membrane. The catalysed reaction is protochlorophyllide a + 4 reduced [2Fe-2S]-[ferredoxin] + 2 O2 + 5 H(+) = protochlorophyllide b + 4 oxidized [2Fe-2S]-[ferredoxin] + 3 H2O. Down-regulated by light. In terms of biological role, part of a translocon most abundantly expressed in etiolated plants and involved in the protochlorophyllide-dependent import of the precursor NADPH:protochlorophyllide oxidoreductase A (pPORA). This Arabidopsis thaliana (Mouse-ear cress) protein is Protochlorophyllide-dependent translocon component 52, chloroplastic.